A 240-amino-acid polypeptide reads, in one-letter code: 1-(5-phosphoribosyl)-5-[(5-phosphoribosylamino)methylideneamino] imidazole-4-carboxamide isomerase (240 aa).

Catalysis depends on D8, which acts as the Proton acceptor. The Proton donor role is filled by D130.

It belongs to the HisA/HisF family.

The protein localises to the cytoplasm. The catalysed reaction is 1-(5-phospho-beta-D-ribosyl)-5-[(5-phospho-beta-D-ribosylamino)methylideneamino]imidazole-4-carboxamide = 5-[(5-phospho-1-deoxy-D-ribulos-1-ylimino)methylamino]-1-(5-phospho-beta-D-ribosyl)imidazole-4-carboxamide. The protein operates within amino-acid biosynthesis; L-histidine biosynthesis; L-histidine from 5-phospho-alpha-D-ribose 1-diphosphate: step 4/9. The protein is 1-(5-phosphoribosyl)-5-[(5-phosphoribosylamino)methylideneamino] imidazole-4-carboxamide isomerase of Elusimicrobium minutum (strain Pei191).